The primary structure comprises 118 residues: Ribosome-binding factor A (118 aa).

It belongs to the RbfA family. Monomer. Binds 30S ribosomal subunits, but not 50S ribosomal subunits or 70S ribosomes.

It is found in the cytoplasm. Functionally, one of several proteins that assist in the late maturation steps of the functional core of the 30S ribosomal subunit. Associates with free 30S ribosomal subunits (but not with 30S subunits that are part of 70S ribosomes or polysomes). Required for efficient processing of 16S rRNA. May interact with the 5'-terminal helix region of 16S rRNA. This is Ribosome-binding factor A from Bacillus cereus (strain ATCC 10987 / NRS 248).